Here is a 379-residue protein sequence, read N- to C-terminus: MKLHEYQARDILARYGIPVTGGGVATTPAEARTIAEQIGGRVVVKAQVFVGGRGKAGGVKLADTPEQAEQVASQILGMNIKGLTVEKVLVAEAITYEREIYLGAIMDRASRRIVMMASAEGGVEIEEVARTNPEAIVKVAAHPMMGLLDFQARDLAYGIGLTDGRQARQFAQIATALYRAYMDVDASLAEINPLVVRADGSLQALDSKIVLDDSGLFRHPDLEAMRDSSDEPEAEQRAREAGITYIKLDGNIGCMVNGAGLAMATMDVVKLYGGEPANFLDIGGGAGKEKVKTALQIILSDPNVKAVMFNIFGGITRVDEVAKGIIAALEEVNTDVPMIARLVGTNEEEGRRILAESALIPAATLAEAAEKAVQAAQSR.

Residues 9 to 237 (RDILARYGIP…SSDEPEAEQR (229 aa)) enclose the ATP-grasp domain. ATP-binding positions include lysine 45, 52–54 (GRG), isoleucine 94, and glutamate 99. Positions 192 and 206 each coordinate Mg(2+). Residues asparagine 257 and 314-316 (GIT) contribute to the substrate site.

The protein belongs to the succinate/malate CoA ligase beta subunit family. As to quaternary structure, heterotetramer of two alpha and two beta subunits. Mg(2+) is required as a cofactor.

The catalysed reaction is succinate + ATP + CoA = succinyl-CoA + ADP + phosphate. The enzyme catalyses GTP + succinate + CoA = succinyl-CoA + GDP + phosphate. The protein operates within carbohydrate metabolism; tricarboxylic acid cycle; succinate from succinyl-CoA (ligase route): step 1/1. In terms of biological role, succinyl-CoA synthetase functions in the citric acid cycle (TCA), coupling the hydrolysis of succinyl-CoA to the synthesis of either ATP or GTP and thus represents the only step of substrate-level phosphorylation in the TCA. The beta subunit provides nucleotide specificity of the enzyme and binds the substrate succinate, while the binding sites for coenzyme A and phosphate are found in the alpha subunit. The polypeptide is Succinate--CoA ligase [ADP-forming] subunit beta (Roseiflexus sp. (strain RS-1)).